We begin with the raw amino-acid sequence, 664 residues long: E3 ubiquitin-protein ligase RNF139 (664 aa).

An N-acetylalanine modification is found at A2. The next 12 membrane-spanning stretches (helical) occupy residues 51-71 (IVLQ…VLIL), 85-105 (AFLL…HIDF), 125-145 (SLWM…VTLL), 154-174 (LIIL…PLHI), 178-198 (LLFT…AVKL), 293-313 (GMSA…LAFI), 323-343 (LGFV…LSGL), 356-376 (MCLL…PVLM), 390-410 (FPVL…SYVL), 420-440 (LFAV…SLTV), 469-489 (SIIE…TMMF), and 495-512 (IRAF…YLQA). The RING-type; atypical zinc finger occupies 547–586 (CAICYHEFTTSARITPCNHYFHALCLRKWLYIQDTCPMCH). The disordered stretch occupies residues 601–664 (VSNNNGFIPP…AAEEFNDDTD (64 aa)). Residues 616–628 (EAVREAAAESDRE) are compositionally biased toward basic and acidic residues. A compositionally biased stretch (acidic residues) spans 629–639 (LNEDDSTDCDD). At S634 the chain carries Phosphoserine. A phosphothreonine mark is found at T635 and T663.

In terms of assembly, interacts with MHC class I and HM13. Interacts with VHL. Component of SCAP-SREBP complex composed of SREBF2, SCAP and RNF139; the complex hampers the interaction between SCAP and SEC24B, thereby reducing SREBF2 proteolytic processing. Interacts with SREBF2 (via C-terminal domain). Interacts with SCAP; the interaction inhibits the interaction of SCAP with SEC24B and hampering the ER to Golgi transport of the SCAP-SREBP complex. Interacts with SEC24B. Interacts with INSIG1 and INSIG2. Interacts with EIF3F and EIF3H; the interaction leads to protein translation inhibitions in a ubiquitination-dependent manner. Interacts with XBP1 isoform 1; the interaction induces ubiquitination and degradation of XBP1 isoform 1. Interacts with AUP1, AMFR and UBE2G2; interaction with AUP1 facilitates interaction of RNF139 with ubiquitin-conjugating enzyme UBE2G2 and ubiquitin ligase AMFR/gp78, leading to sterol-induced ubiquitination of HMGCR and its subsequent proteasomal degradation. Post-translationally, autoubiquitinated. Ubiquitination is induced by sterol and leads to ist degradation via the ubiquitin-proteasome pathway. Highly expressed in testis, placenta and adrenal gland. Moderate expression in heart, brain, liver, skeletal muscle and pancreas, and low expression in lung and kidney.

It is found in the endoplasmic reticulum membrane. It carries out the reaction S-ubiquitinyl-[E2 ubiquitin-conjugating enzyme]-L-cysteine + [acceptor protein]-L-lysine = [E2 ubiquitin-conjugating enzyme]-L-cysteine + N(6)-ubiquitinyl-[acceptor protein]-L-lysine.. It participates in protein modification; protein ubiquitination. E3-ubiquitin ligase; acts as a negative regulator of cell proliferation through mechanisms involving G2/M arrest and cell death. Required for MHC class I ubiquitination in cells expressing the cytomegalovirus protein US2 before dislocation from the endoplasmic reticulum (ER). Affects SREBP processing by hindering the SREBP-SCAP complex translocation from the ER to the Golgi, thereby reducing SREBF2 target gene expression. Involved in the sterol-accelerated degradation of HMGCR. This is achieved through binding of RNF139 to INSIG1 and/or INSIG2 at the ER membrane. In addition, interaction of RNF139 with AUP1 facilitates interaction of RNF139 with ubiquitin-conjugating enzyme UBE2G2 and ubiquitin ligase AMFR, leading to ubiquitination of HMGCR. The ubiquitinated HMGCR is then released from the ER into the cytosol for subsequent destruction. Required for INSIG1 ubiquitination. May be required for EIF3 complex ubiquitination. The sequence is that of E3 ubiquitin-protein ligase RNF139 from Homo sapiens (Human).